We begin with the raw amino-acid sequence, 89 residues long: Small ribosomal subunit protein uS15 (89 aa).

It belongs to the universal ribosomal protein uS15 family. In terms of assembly, part of the 30S ribosomal subunit. Forms a bridge to the 50S subunit in the 70S ribosome, contacting the 23S rRNA.

Functionally, one of the primary rRNA binding proteins, it binds directly to 16S rRNA where it helps nucleate assembly of the platform of the 30S subunit by binding and bridging several RNA helices of the 16S rRNA. Its function is as follows. Forms an intersubunit bridge (bridge B4) with the 23S rRNA of the 50S subunit in the ribosome. The protein is Small ribosomal subunit protein uS15 of Syntrophomonas wolfei subsp. wolfei (strain DSM 2245B / Goettingen).